The sequence spans 318 residues: HTH-type transcriptional regulatory protein TyrR (318 aa).

Residues 15–239 (FIVQSEAMKS…LYNTLYRACS (225 aa)) form the Sigma-54 factor interaction; truncated domain. ATP-binding positions include 43–50 (GETGSGKD) and 101–110 (ANKGTVLLDG). The segment at residues 292–312 (STRKLAQRLGVSHTAIANKLK) is a DNA-binding region (H-T-H motif).

Homodimer. In presence of tyrosine (or high concentrations of phenylalanine or tryptophan) and ATP, it self-associates to form a hexamer.

It localises to the cytoplasm. With respect to regulation, the DNA binding ability is drastically reduced in the presence of ATP. Tyrosine further reduces the binding affinity of TyrR in the presence of ATP. Transcriptional regulator of the TyrR regulon, which includes a number of genes coding for proteins involved in the biosynthesis or transport of the three aromatic amino acids, phenylalanine, tyrosine and tryptophan. These three aromatic amino acids act as effectors which bind to the TyrR protein to form an active regulatory protein. Acts by binding specifically to TyrR boxes in the promoter region of the target genes. Can efficiently repress the transcription of the aroF promoter, but lacks the ability to function as a transcriptional activator. This Haemophilus influenzae (strain ATCC 51907 / DSM 11121 / KW20 / Rd) protein is HTH-type transcriptional regulatory protein TyrR.